A 690-amino-acid polypeptide reads, in one-letter code: Glycine--tRNA ligase beta subunit (690 aa).

It belongs to the class-II aminoacyl-tRNA synthetase family. In terms of assembly, tetramer of two alpha and two beta subunits.

The protein localises to the cytoplasm. The catalysed reaction is tRNA(Gly) + glycine + ATP = glycyl-tRNA(Gly) + AMP + diphosphate. This chain is Glycine--tRNA ligase beta subunit, found in Pediococcus pentosaceus (strain ATCC 25745 / CCUG 21536 / LMG 10740 / 183-1w).